Reading from the N-terminus, the 396-residue chain is Purine ribonucleoside efflux pump NepI (396 aa).

The Cytoplasmic segment spans residues Met1–Ala21. Residues Val22 to Leu42 traverse the membrane as a helical segment. At Leu43–Glu54 the chain is on the periplasmic side. The chain crosses the membrane as a helical span at residues Gly55–Ile75. Residues Thr76–Arg85 lie on the Cytoplasmic side of the membrane. A helical transmembrane segment spans residues Asn86–Asn106. Ser107 is a topological domain (periplasmic). A helical transmembrane segment spans residues Phe108–Met128. Residues Ser129–Ser147 lie on the Cytoplasmic side of the membrane. A helical membrane pass occupies residues Val148–Gly168. The Periplasmic portion of the chain corresponds to Glu169 to Asn175. The helical transmembrane segment at Val176–Pro196 threads the bilayer. The Cytoplasmic portion of the chain corresponds to Ser197–Arg215. A helical transmembrane segment spans residues Pro216–Phe236. Over Thr237 to Thr255 the chain is Periplasmic. Residues Leu256–Leu276 form a helical membrane-spanning segment. The Cytoplasmic portion of the chain corresponds to Lys277–Lys281. Residues Leu282–Gly302 form a helical membrane-spanning segment. Over Ser303 to Lys305 the chain is Periplasmic. Residues Ile306–Trp326 traverse the membrane as a helical segment. The Cytoplasmic segment spans residues Ser327 to Ser343. A helical membrane pass occupies residues Ile344–Leu364. The Periplasmic portion of the chain corresponds to Asp365 to Asn366. The helical transmembrane segment at Ile367–Val387 threads the bilayer. The Cytoplasmic segment spans residues Thr388–Ser396.

This sequence belongs to the major facilitator superfamily. DHA1 family. NepI (TC 2.A.1.2.26) subfamily.

The protein resides in the cell inner membrane. It catalyses the reaction inosine(in) + H(+)(out) = inosine(out) + H(+)(in). It carries out the reaction guanosine(in) + H(+)(out) = guanosine(out) + H(+)(in). Functionally, involved in the efflux of purine ribonucleosides, such as inosine and guanosine. The chain is Purine ribonucleoside efflux pump NepI from Shigella sonnei (strain Ss046).